The sequence spans 638 residues: SUMO-activating enzyme subunit 2 (638 aa).

Residues 24-29 (GAGGIG), Asp-48, 56-59 (NLNR), Lys-72, 95-96 (SI), and 117-122 (DNRAAR) each bind ATP. Positions 158 and 161 each coordinate Zn(2+). A Glycyl lysine isopeptide (Lys-Gly) (interchain with G-Cter in SUMO1) cross-link involves residue Lys-164. Cys-173 functions as the Glycyl thioester intermediate in the catalytic mechanism. A Glycyl lysine isopeptide (Lys-Gly) (interchain with G-Cter in SUMO) cross-link involves residue Lys-190. The interval 202–233 (ADQEVSPDRADPEAAWEPTEAEARARASNEDG) is disordered. Ser-207 carries the post-translational modification Phosphoserine. A compositionally biased stretch (basic and acidic residues) spans 222–233 (AEARARASNEDG). A Glycyl lysine isopeptide (Lys-Gly) (interchain with G-Cter in SUMO1); alternate cross-link involves residue Lys-236. Residues Lys-236 and Lys-257 each participate in a glycyl lysine isopeptide (Lys-Gly) (interchain with G-Cter in SUMO2); alternate cross-link. Residues Lys-257 and Lys-271 each participate in a glycyl lysine isopeptide (Lys-Gly) (interchain with G-Cter in SUMO); alternate cross-link. The residue at position 271 (Lys-271) is an N6-acetyllysine; alternate. Lys-275 is covalently cross-linked (Glycyl lysine isopeptide (Lys-Gly) (interchain with G-Cter in SUMO)). A Glycyl lysine isopeptide (Lys-Gly) (interchain with G-Cter in SUMO2) cross-link involves residue Lys-369. A Glycyl lysine isopeptide (Lys-Gly) (interchain with G-Cter in SUMO1); alternate cross-link involves residue Lys-418. A Glycyl lysine isopeptide (Lys-Gly) (interchain with G-Cter in SUMO2); alternate cross-link involves residue Lys-418. Zn(2+)-binding residues include Cys-439 and Cys-442. Position 505 is a phosphoserine (Ser-505). Lys-538 participates in a covalent cross-link: Glycyl lysine isopeptide (Lys-Gly) (interchain with G-Cter in SUMO2). Ser-548 and Ser-590 each carry phosphoserine. The segment covering 548–561 (SPEKVGPKQAEDAA) has biased composition (basic and acidic residues). The tract at residues 548 to 638 (SPEKVGPKQA…EDPDDVIALD (91 aa)) is disordered. Residues 581-594 (EQDDVLIVDSDEEG) are compositionally biased toward acidic residues. Residues 603–614 (GDDKARKRKLEE) are compositionally biased toward basic and acidic residues. Lys-609 is covalently cross-linked (Glycyl lysine isopeptide (Lys-Gly) (interchain with G-Cter in SUMO)). A Glycyl lysine isopeptide (Lys-Gly) (interchain with G-Cter in SUMO); alternate cross-link involves residue Lys-611. The residue at position 611 (Lys-611) is an N6-acetyllysine; alternate. Lys-621 participates in a covalent cross-link: Glycyl lysine isopeptide (Lys-Gly) (interchain with G-Cter in SUMO). Residues 628-638 (MEDPDDVIALD) are compositionally biased toward acidic residues.

The protein belongs to the ubiquitin-activating E1 family. In terms of assembly, heterodimer of SAE1 and UBA2/SAE2. The heterodimer corresponds to the two domains that are encoded on a single polypeptide chain in ubiquitin-activating enzyme E1. Interacts with UBE2I. Sumoylated with SUMO1 and SUMO2/3 and by UBC9. Sumoylation at Lys-236 inhibits enzymatic activity. Sumoylation at the C-terminal lysine cluster plays an essential role in nuclear trafficking. In terms of tissue distribution, broadly expressed, with highest levels in testis.

It is found in the cytoplasm. Its subcellular location is the nucleus. It participates in protein modification; protein sumoylation. Its function is as follows. The heterodimer acts as an E1 ligase for SUMO1, SUMO2, SUMO3, and probably SUMO4. It mediates ATP-dependent activation of SUMO proteins followed by formation of a thioester bond between a SUMO protein and a conserved active site cysteine residue on UBA2/SAE2. This Mus musculus (Mouse) protein is SUMO-activating enzyme subunit 2 (Uba2).